Here is an 868-residue protein sequence, read N- to C-terminus: Metabotropic glutamate receptor 6 (868 aa).

A signal peptide spans 1-20 (MARLLLALLAWLAQMSPVRA). The Extracellular portion of the chain corresponds to 21–576 (AGSVRLAGGL…VVRLTWSSPW (556 aa)). Cysteine 48 and cysteine 90 form a disulfide bridge. L-glutamate-binding positions include serine 145, 166–168 (AST), and tyrosine 216. Cystine bridges form between cysteine 235–cysteine 527, cysteine 358–cysteine 374, cysteine 414–cysteine 421, cysteine 509–cysteine 528, cysteine 513–cysteine 531, cysteine 534–cysteine 546, and cysteine 549–cysteine 562. An N-linked (GlcNAc...) asparagine glycan is attached at asparagine 287. Aspartate 298 is a binding site for L-glutamate. Residue lysine 391 participates in L-glutamate binding. N-linked (GlcNAc...) asparagine glycosylation is found at asparagine 442 and asparagine 470. Asparagine 558 carries N-linked (GlcNAc...) asparagine glycosylation. A helical transmembrane segment spans residues 577-599 (AAPPLLLAVLGIMATTTVVGTFV). Residues 600 to 613 (RHNNTPIVRASGRE) are Cytoplasmic-facing. Residues 614 to 634 (LSYVLLTGIFLIYAVTFLMVA) traverse the membrane as a helical segment. Over 635–645 (EPGAAVCATRR) the chain is Extracellular. A helical transmembrane segment spans residues 646–664 (LFLGLGTTLSYSALLTKTN). The Cytoplasmic segment spans residues 665–688 (RIYRIFEQGKRSVTPPPFISPTSQ). Residues 689–709 (LVITFSLTSLQVVGVIAWLGA) traverse the membrane as a helical segment. Topologically, residues 710–739 (QPPHSVIDYEEQRTVDPEQARGVLKCDMSD) are extracellular. Residues 740–761 (LSLIGCLGYSLLLMVTCTVYAI) traverse the membrane as a helical segment. The Cytoplasmic segment spans residues 762–774 (KARGVPETFNEAK). A helical transmembrane segment spans residues 775–797 (PIGFTMYTTCIVWLAFVPIFFGT). The Extracellular portion of the chain corresponds to 798–810 (AQSAEKIYIQTTT). The chain crosses the membrane as a helical span at residues 811–836 (LTVSLSLSASVSLGMLYVPKTYVILF). Residues 837 to 868 (HPEQNVQKRKRSLKTTSTVAAPPKGADTEDPK) are Cytoplasmic-facing. A disordered region spans residues 845-868 (RKRSLKTTSTVAAPPKGADTEDPK).

It belongs to the G-protein coupled receptor 3 family. In terms of assembly, homodimer. Interacts with GPR179. Interacts with photoreceptor synaptic protein LRIT1 (via its N-terminal extracellular domain).

The protein localises to the cell membrane. It is found in the endoplasmic reticulum membrane. It localises to the golgi apparatus membrane. The protein resides in the cell projection. Its subcellular location is the dendrite. Functionally, G-protein coupled receptor for glutamate. Ligand binding causes a conformation change that triggers signaling via guanine nucleotide-binding proteins (G proteins) and modulates the activity of down-stream effectors, such as adenylate cyclase. Signaling inhibits adenylate cyclase activity. Signaling stimulates TRPM1 channel activity and Ca(2+) uptake. Required for normal vision. This Oryctolagus cuniculus (Rabbit) protein is Metabotropic glutamate receptor 6 (GRM6).